Here is a 440-residue protein sequence, read N- to C-terminus: Probable circularly permuted 1,3-beta-glucanase (440 aa).

Positions 1–20 (MHYSLFFGAALAASVSTVSA) are cleaved as a signal peptide. Over residues 100–112 (GEKPKRELKPSIH) the composition is skewed to basic and acidic residues. 2 disordered regions span residues 100-126 (GEKP…FHEK) and 153-195 (PAAP…VAPG). A compositionally biased stretch (basic residues) spans 113–125 (ERRHGHSHQRFHE). Residues 153-164 (PAAPTSAPGAPG) show a composition bias toward low complexity. The span at 177 to 186 (GGDKPKDPKP) shows a compositional bias: basic and acidic residues. An ExDxxE motif motif is present at residues 350–355 (EFDVLE).

The protein belongs to the PGA52 family.

It is found in the secreted. It carries out the reaction Hydrolysis of (1-&gt;3)-beta-D-glucosidic linkages in (1-&gt;3)-beta-D-glucans.. Probable circularly permuted 1,3-beta-glucanase involved in cell wall modification through beta-1,3-glucan network alterations such as increased branching or remodeling. This Arthroderma benhamiae (strain ATCC MYA-4681 / CBS 112371) (Trichophyton mentagrophytes) protein is Probable circularly permuted 1,3-beta-glucanase.